The primary structure comprises 295 residues: Oxidoreductase AN1597 (295 aa).

Belongs to the asaB hydroxylase/desaturase family.

The protein operates within secondary metabolite biosynthesis; terpenoid biosynthesis. Oxidoreductase; part of the gene cluster that mediates the biosynthesis of the diterpene ent-pimara-8(14),15-diene (PD). Within the cluster, the HMG-CoA reductase AN1593 functions in the mevalonate pathway, which produces isoprenoid precursors. The geranylgeranyl pyrophosphate (GGPP) synthase AN1592 is needed in the formation of GGPP, the precursor for diterpenes. Lastly, the pimaradiene synthase pbcA performs the 2 cyclization steps that convert GGPP to ent-pimara-8(14),15-diene. The putative roles of the remaining cluster enzymes in ent-pimara-8(14),15-diene biosynthesis is unclear. The cytochrome P450 monooxygenase AN1598, the glutathione S-transferase AN1595, the oxidoreductases AN1596 and AN1597 probably function as decorative enzymes. It is possible that in biological conditions the compound is oxidized to ent-pimara-8(14),15-dien-19-oic acid, which is a bioactive diterpene compound predominant in many plant extracts. This chain is Oxidoreductase AN1597, found in Emericella nidulans (strain FGSC A4 / ATCC 38163 / CBS 112.46 / NRRL 194 / M139) (Aspergillus nidulans).